The following is a 602-amino-acid chain: Leucine-rich repeat-containing protein 40 (602 aa).

The segment at 1-20 (MSRLKRIAGQDPRAGFKAAG) is disordered. Ser71 is modified (phosphoserine). LRR repeat units follow at residues 83 to 104 (DLTK…LRLL), 106 to 127 (ALTV…MREL), 129 to 150 (NLQK…ITNL), 152 to 173 (NLKC…FEQL), 175 to 196 (NLED…FSSL), 198 to 219 (SLVR…INRM), 221 to 242 (RLKH…LAGM), 244 to 265 (SLEL…PSCS), 266 to 286 (LLKE…EHLK), 290 to 311 (SILV…IILL), 313 to 335 (SLER…GNLH), 336 to 356 (LKFL…IINK), 400 to 421 (TLKI…VFNA), 426 to 447 (IITS…MVEL), 450 to 471 (MVSD…LCML), 473 to 494 (KLTF…MESL), 496 to 517 (RLQT…LYRI), 519 to 540 (TLET…KMKM), 543 to 564 (NLTT…LGNC), and 566 to 586 (NLRT…AILI).

The sequence is that of Leucine-rich repeat-containing protein 40 (LRRC40) from Macaca fascicularis (Crab-eating macaque).